The chain runs to 67 residues: Small ribosomal subunit protein eS31 (67 aa).

Residues Cys-31, Cys-34, Cys-49, and Cys-52 each contribute to the Zn(2+) site. The C4-type zinc finger occupies 31–52 (CPKCGAGVFMAEHLNRFACGKC).

The protein belongs to the eukaryotic ribosomal protein eS31 family. Part of the 30S ribosomal subunit. The cofactor is Zn(2+).

The protein is Small ribosomal subunit protein eS31 of Methanococcus maripaludis (strain C7 / ATCC BAA-1331).